A 1485-amino-acid polypeptide reads, in one-letter code: Putative E3 ubiquitin-protein ligase LIN-1 (1485 aa).

A compositionally biased stretch (acidic residues) spans 337–353; it reads EENEDDSDSELENESVD. Disordered stretches follow at residues 337 to 363 and 384 to 417; these read EENE…IFSP and NQIP…KRDS. The region spanning 510-585 is the U-box domain; sequence KPPKDFVCPI…TSWKEQNPEL (76 aa). WD repeat units lie at residues 1204–1241, 1246–1283, 1409–1448, and 1454–1485; these read SSNG…PRVI, EHTK…IKCI, SLST…RVAS, and GHTK…WALD.

Expressed in roots and nodules, and at very low levels in calli and seedling shoots.

The catalysed reaction is S-ubiquitinyl-[E2 ubiquitin-conjugating enzyme]-L-cysteine + [acceptor protein]-L-lysine = [E2 ubiquitin-conjugating enzyme]-L-cysteine + N(6)-ubiquitinyl-[acceptor protein]-L-lysine.. Its pathway is protein modification; protein ubiquitination. Its function is as follows. Putative E3 ubiquitin-protein ligase involved in the rhizobial infection process. Plays an important role in the early steps of infection thread formation and in growth and differentiation of nodules. This is Putative E3 ubiquitin-protein ligase LIN-1 from Lotus japonicus (Lotus corniculatus var. japonicus).